The following is a 338-amino-acid chain: RNA 3'-terminal phosphate cyclase (338 aa).

Residues glutamine 103 and 283-287 each bind ATP; that span reads YLADQ. Catalysis depends on histidine 308, which acts as the Tele-AMP-histidine intermediate.

This sequence belongs to the RNA 3'-terminal cyclase family. Type 1 subfamily.

The protein resides in the cytoplasm. The catalysed reaction is a 3'-end 3'-phospho-ribonucleotide-RNA + ATP = a 3'-end 2',3'-cyclophospho-ribonucleotide-RNA + AMP + diphosphate. Its function is as follows. Catalyzes the conversion of 3'-phosphate to a 2',3'-cyclic phosphodiester at the end of RNA. The mechanism of action of the enzyme occurs in 3 steps: (A) adenylation of the enzyme by ATP; (B) transfer of adenylate to an RNA-N3'P to produce RNA-N3'PP5'A; (C) and attack of the adjacent 2'-hydroxyl on the 3'-phosphorus in the diester linkage to produce the cyclic end product. The biological role of this enzyme is unknown but it is likely to function in some aspects of cellular RNA processing. The sequence is that of RNA 3'-terminal phosphate cyclase from Escherichia coli O6:K15:H31 (strain 536 / UPEC).